A 346-amino-acid chain; its full sequence is Very-long-chain 3-oxoacyl-CoA reductase (346 aa).

Residues 23–43 (AAWIVFGLGISKMVFLTLNFS) form a helical membrane-spanning segment. NADP(+)-binding residues include V69, D123, N150, Y222, K226, V255, and S257. Residue Y222 is the Proton donor of the active site. K226 (lowers pKa of active site Tyr) is an active-site residue.

The protein belongs to the short-chain dehydrogenases/reductases (SDR) family.

It localises to the endoplasmic reticulum membrane. It catalyses the reaction a very-long-chain (3R)-3-hydroxyacyl-CoA + NADP(+) = a very-long-chain 3-oxoacyl-CoA + NADPH + H(+). It functions in the pathway lipid metabolism; fatty acid biosynthesis. In terms of biological role, component of the microsomal membrane bound fatty acid elongation system, which produces the 26-carbon very long-chain fatty acids (VLCFA) from palmitate. Catalyzes the reduction of the 3-ketoacyl-CoA intermediate that is formed in each cycle of fatty acid elongation. VLCFAs serve as precursors for ceramide and sphingolipids. This is Very-long-chain 3-oxoacyl-CoA reductase from Kluyveromyces lactis (strain ATCC 8585 / CBS 2359 / DSM 70799 / NBRC 1267 / NRRL Y-1140 / WM37) (Yeast).